Reading from the N-terminus, the 227-residue chain is Ribonuclease 3 (227 aa).

Residues 5 to 127 (YQKLSRRIGY…IIGAMYLDAG (123 aa)) enclose the RNase III domain. Glu-40 serves as a coordination point for Mg(2+). The active site involves Asp-44. Asp-113 and Glu-116 together coordinate Mg(2+). Glu-116 is a catalytic residue. A DRBM domain is found at 154 to 224 (DAKTRLQEFL…AAKALKKLEK (71 aa)).

This sequence belongs to the ribonuclease III family. Homodimer. The cofactor is Mg(2+).

The protein localises to the cytoplasm. It catalyses the reaction Endonucleolytic cleavage to 5'-phosphomonoester.. Functionally, digests double-stranded RNA. Involved in the processing of primary rRNA transcript to yield the immediate precursors to the large and small rRNAs (23S and 16S). Processes some mRNAs, and tRNAs when they are encoded in the rRNA operon. Processes pre-crRNA and tracrRNA of type II CRISPR loci if present in the organism. The sequence is that of Ribonuclease 3 from Marinomonas sp. (strain MWYL1).